A 308-amino-acid polypeptide reads, in one-letter code: Ribosomal RNA small subunit methyltransferase H (308 aa).

S-adenosyl-L-methionine is bound by residues Gly33–His35, Asp52, Tyr81, Asp99, and Gln106.

Belongs to the methyltransferase superfamily. RsmH family.

It localises to the cytoplasm. It carries out the reaction cytidine(1402) in 16S rRNA + S-adenosyl-L-methionine = N(4)-methylcytidine(1402) in 16S rRNA + S-adenosyl-L-homocysteine + H(+). Functionally, specifically methylates the N4 position of cytidine in position 1402 (C1402) of 16S rRNA. The polypeptide is Ribosomal RNA small subunit methyltransferase H (Francisella philomiragia subsp. philomiragia (strain ATCC 25017 / CCUG 19701 / FSC 153 / O#319-036)).